Here is a 364-residue protein sequence, read N- to C-terminus: Methylthioribose-1-phosphate isomerase (364 aa).

Asp-254 acts as the Proton donor in catalysis.

Belongs to the eIF-2B alpha/beta/delta subunits family. MtnA subfamily.

It is found in the cytoplasm. The protein localises to the nucleus. The catalysed reaction is 5-(methylsulfanyl)-alpha-D-ribose 1-phosphate = 5-(methylsulfanyl)-D-ribulose 1-phosphate. Its pathway is amino-acid biosynthesis; L-methionine biosynthesis via salvage pathway; L-methionine from S-methyl-5-thio-alpha-D-ribose 1-phosphate: step 1/6. In terms of biological role, catalyzes the interconversion of methylthioribose-1-phosphate (MTR-1-P) into methylthioribulose-1-phosphate (MTRu-1-P). In Drosophila ananassae (Fruit fly), this protein is Methylthioribose-1-phosphate isomerase.